The sequence spans 120 residues: Chaperonin GroEL (120 aa).

23–27 contacts ATP; it reads DGTTT.

It belongs to the chaperonin (HSP60) family. In terms of assembly, forms a cylinder of 14 subunits composed of two heptameric rings stacked back-to-back. Interacts with the co-chaperonin GroES.

It is found in the cytoplasm. The catalysed reaction is ATP + H2O + a folded polypeptide = ADP + phosphate + an unfolded polypeptide.. Its function is as follows. Together with its co-chaperonin GroES, plays an essential role in assisting protein folding. The GroEL-GroES system forms a nano-cage that allows encapsulation of the non-native substrate proteins and provides a physical environment optimized to promote and accelerate protein folding. The chain is Chaperonin GroEL from Mycobacterium kansasii.